We begin with the raw amino-acid sequence, 858 residues long: Leucine--tRNA ligase (858 aa).

Positions 42–52 match the 'HIGH' region motif; sequence PYPSGRLHMGH. The 'KMSKS' region motif lies at 618–622; sequence KMSKS. Lys621 contacts ATP.

The protein belongs to the class-I aminoacyl-tRNA synthetase family.

The protein resides in the cytoplasm. The catalysed reaction is tRNA(Leu) + L-leucine + ATP = L-leucyl-tRNA(Leu) + AMP + diphosphate. This chain is Leucine--tRNA ligase, found in Vibrio atlanticus (strain LGP32) (Vibrio splendidus (strain Mel32)).